Reading from the N-terminus, the 409-residue chain is Phosphatidylglycerol--prolipoprotein diacylglyceryl transferase (409 aa).

The next 4 membrane-spanning stretches (helical) occupy residues 18 to 38, 48 to 68, 93 to 113, and 119 to 139; these read PVPL…AVFV, MDPM…IVGA, IWNG…GAWL, and GISL…AQAI. Residue arginine 141 coordinates a 1,2-diacyl-sn-glycero-3-phospho-(1'-sn-glycerol). Helical transmembrane passes span 177 to 197 and 234 to 254; these read QPTF…LLVV and ILGL…ALLA. A disordered region spans residues 273-409; the sequence is ALGIARSRPA…AVPPEEPQLP (137 aa). Composition is skewed to low complexity over residues 297–309, 320–335, and 348–375; these read AAAP…DSAA, PDLG…SAGS, and TATT…TATT.

Belongs to the Lgt family.

It is found in the cell membrane. The catalysed reaction is L-cysteinyl-[prolipoprotein] + a 1,2-diacyl-sn-glycero-3-phospho-(1'-sn-glycerol) = an S-1,2-diacyl-sn-glyceryl-L-cysteinyl-[prolipoprotein] + sn-glycerol 1-phosphate + H(+). It functions in the pathway protein modification; lipoprotein biosynthesis (diacylglyceryl transfer). Functionally, catalyzes the transfer of the diacylglyceryl group from phosphatidylglycerol to the sulfhydryl group of the N-terminal cysteine of a prolipoprotein, the first step in the formation of mature lipoproteins. This is Phosphatidylglycerol--prolipoprotein diacylglyceryl transferase from Frankia casuarinae (strain DSM 45818 / CECT 9043 / HFP020203 / CcI3).